Reading from the N-terminus, the 256-residue chain is Late embryogenesis abundant protein 32 (256 aa).

The segment covering 1–14 (MSQEQPRRPREPVK) has biased composition (basic and acidic residues). The disordered stretch occupies residues 1 to 20 (MSQEQPRRPREPVKYGDVFE). The Nuclear localization signal (NLS) signature appears at 5–9 (QPRRP). SMP domains follow at residues 13-66 (VKYG…TTNI), 130-187 (ITIG…HNAT), and 195-253 (IKLR…LNER).

It belongs to the LEA type SMP family. Embryo specific, only in dry mature seeds. Expressed at low levels.

Its subcellular location is the cytoplasm. The protein localises to the nucleus. Its function is as follows. LEA proteins are late embryonic proteins abundant in higher plant seed embryos. The function of those proteins is not known. The polypeptide is Late embryogenesis abundant protein 32 (Arabidopsis thaliana (Mouse-ear cress)).